We begin with the raw amino-acid sequence, 90 residues long: Progonadoliberin-3 (90 aa).

Residues 1–23 form the signal peptide; it reads MEANSRVMVRVLLLALVVQVTLS. Glutamine 24 is modified (pyrrolidone carboxylic acid). A Glycine amide modification is found at glycine 33. The tract at residues 56-90 is disordered; sequence LPEEASAQTQERLRPYNVINDDSSHFDRKKRSPNK.

It belongs to the GnRH family.

It localises to the secreted. Stimulates the secretion of gonadotropins. The polypeptide is Progonadoliberin-3 (gnrh3) (Dicentrarchus labrax (European seabass)).